A 364-amino-acid chain; its full sequence is Caffeic acid 3-O-methyltransferase 2 (364 aa).

Substrate is bound at residue 129–135 (MNQDKVL). Positions 161–179 (AFEYHGTDPRFNKVFNKGM) are substrate binding. The S-adenosyl-L-methionine site is built by Gly-207, Asp-230, Asp-250, Met-251, and Lys-264. His-268 (proton acceptor) is an active-site residue.

This sequence belongs to the class I-like SAM-binding methyltransferase superfamily. Cation-independent O-methyltransferase family. COMT subfamily. In terms of assembly, homodimer.

It carries out the reaction (E)-caffeate + S-adenosyl-L-methionine = (E)-ferulate + S-adenosyl-L-homocysteine + H(+). Its pathway is aromatic compound metabolism; phenylpropanoid biosynthesis. Catalyzes the conversion of caffeic acid to ferulic acid and of 5-hydroxyferulic acid to sinapic acid. The resulting products may subsequently be converted to the corresponding alcohols that are incorporated into lignins. The chain is Caffeic acid 3-O-methyltransferase 2 (OMT2) from Populus tremuloides (Quaking aspen).